Reading from the N-terminus, the 132-residue chain is Small ribosomal subunit protein uS8c (132 aa).

The protein belongs to the universal ribosomal protein uS8 family. In terms of assembly, part of the 30S ribosomal subunit.

It is found in the plastid. Its subcellular location is the chloroplast. Its function is as follows. One of the primary rRNA binding proteins, it binds directly to 16S rRNA central domain where it helps coordinate assembly of the platform of the 30S subunit. The sequence is that of Small ribosomal subunit protein uS8c (rps8) from Gracilaria tenuistipitata var. liui (Red alga).